A 955-amino-acid polypeptide reads, in one-letter code: Glycine dehydrogenase (decarboxylating) (955 aa).

Lysine 702 bears the N6-(pyridoxal phosphate)lysine mark.

The protein belongs to the GcvP family. In terms of assembly, the glycine cleavage system is composed of four proteins: P, T, L and H. The cofactor is pyridoxal 5'-phosphate.

It catalyses the reaction N(6)-[(R)-lipoyl]-L-lysyl-[glycine-cleavage complex H protein] + glycine + H(+) = N(6)-[(R)-S(8)-aminomethyldihydrolipoyl]-L-lysyl-[glycine-cleavage complex H protein] + CO2. Its function is as follows. The glycine cleavage system catalyzes the degradation of glycine. The P protein binds the alpha-amino group of glycine through its pyridoxal phosphate cofactor; CO(2) is released and the remaining methylamine moiety is then transferred to the lipoamide cofactor of the H protein. The polypeptide is Glycine dehydrogenase (decarboxylating) (Stenotrophomonas maltophilia (strain K279a)).